The sequence spans 1123 residues: Translation initiation factor IF-2 (1123 aa).

2 disordered regions span residues 52–452 and 480–512; these read LLKA…KVHI and LARPSKPKSQQKAAPKPVAAMRKRRKETTRQRQ. 3 stretches are compositionally biased toward low complexity: residues 54–73, 94–113, and 121–133; these read KAGSAPRAAASPSKPAPGKA, KPAASSPPAAPAAPTKAKSP, and AAPSRPAAPKASA. Over residues 170–187 the composition is skewed to pro residues; sequence PPSPPARPVPQQPSPPSA. Residues 193–206 show a composition bias toward low complexity; that stretch reads APIRRAAPNDAPRP. Pro residues-rich tracts occupy residues 207-217 and 258-268; these read ANAPPSRPQPK and SPRPAVSPRPS. Positions 285-304 are enriched in low complexity; it reads RPGAPTRPGTGAGRPSRPGG. The span at 320 to 339 shows a compositional bias: gly residues; that stretch reads GNRGEGGRPPGGARPAGGGN. A compositionally biased stretch (pro residues) spans 388–403; it reads ATPPVSRPTATPPSPA. A compositionally biased stretch (gly residues) spans 412 to 422; sequence FRPGAGPGGQR. Residues 425–439 show a composition bias toward basic and acidic residues; the sequence is GRPDWDDSAKLDALR. Over residues 486–499 the composition is skewed to low complexity; it reads PKSQQKAAPKPVAA. The segment covering 500 to 512 has biased composition (basic residues); sequence MRKRRKETTRQRQ. The 173-residue stretch at 615–787 folds into the tr-type G domain; that stretch reads RRPPVVTVMG…LLLVTEVEDL (173 aa). Residues 624 to 631 form a G1 region; sequence GHVDHGKT. 624-631 is a binding site for GTP; the sequence is GHVDHGKT. The tract at residues 649 to 653 is G2; the sequence is GITQH. A G3 region spans residues 674 to 677; sequence DTPG. Residues 674 to 678 and 728 to 731 contribute to the GTP site; these read DTPGH and NKID. The interval 728 to 731 is G4; that stretch reads NKID. The tract at residues 764-766 is G5; that stretch reads SAI.

Belongs to the TRAFAC class translation factor GTPase superfamily. Classic translation factor GTPase family. IF-2 subfamily.

It localises to the cytoplasm. In terms of biological role, one of the essential components for the initiation of protein synthesis. Protects formylmethionyl-tRNA from spontaneous hydrolysis and promotes its binding to the 30S ribosomal subunits. Also involved in the hydrolysis of GTP during the formation of the 70S ribosomal complex. This chain is Translation initiation factor IF-2, found in Synechococcus sp. (strain WH7803).